Reading from the N-terminus, the 272-residue chain is Putative pyruvate, phosphate dikinase regulatory protein (272 aa).

An ADP-binding site is contributed by 147–154 (GLSRTSKT).

The protein belongs to the pyruvate, phosphate/water dikinase regulatory protein family. PDRP subfamily.

The enzyme catalyses N(tele)-phospho-L-histidyl/L-threonyl-[pyruvate, phosphate dikinase] + ADP = N(tele)-phospho-L-histidyl/O-phospho-L-threonyl-[pyruvate, phosphate dikinase] + AMP + H(+). It catalyses the reaction N(tele)-phospho-L-histidyl/O-phospho-L-threonyl-[pyruvate, phosphate dikinase] + phosphate + H(+) = N(tele)-phospho-L-histidyl/L-threonyl-[pyruvate, phosphate dikinase] + diphosphate. Functionally, bifunctional serine/threonine kinase and phosphorylase involved in the regulation of the pyruvate, phosphate dikinase (PPDK) by catalyzing its phosphorylation/dephosphorylation. The polypeptide is Putative pyruvate, phosphate dikinase regulatory protein (Clostridium botulinum (strain Alaska E43 / Type E3)).